Here is a 119-residue protein sequence, read N- to C-terminus: Fluoride-specific ion channel FluC (119 aa).

A run of 4 helical transmembrane segments spans residues 5-25 (ILPL…LNLA), 30-50 (LSPA…IGIF), 59-79 (WKLL…GFSL), and 92-112 (SALA…WLGL). Na(+)-binding residues include glycine 69 and threonine 72.

This sequence belongs to the fluoride channel Fluc/FEX (TC 1.A.43) family.

The protein localises to the cell inner membrane. It carries out the reaction fluoride(in) = fluoride(out). Na(+) is not transported, but it plays an essential structural role and its presence is essential for fluoride channel function. Functionally, fluoride-specific ion channel. Important for reducing fluoride concentration in the cell, thus reducing its toxicity. The sequence is that of Fluoride-specific ion channel FluC from Neisseria gonorrhoeae (strain NCCP11945).